Consider the following 389-residue polypeptide: Na(+)/H(+) antiporter NhaA (389 aa).

11 helical membrane passes run 17-37 (ILLLIAVAFAMLMANSPLAGF), 59-79 (LLLWINDGLMALFFLLIGLEV), 95-115 (SLPTFAAIGGMLVPAGIYLLF), 124-144 (AGWAIPAATDIAFALGIMALL), 154-174 (VFLLALAIIDDLGVIVIIALF), 177-197 (SDLSTVSLIIASIAIVGLVAL), 213-233 (LILWVAVLKSGVHATLAGVII), 261-281 (FLILPVFAFANAGVALGNMSL), 292-312 (IALGLMLGKPIGVMLFSFVAV), 328-348 (IAPVAAMCGIGFTMSMFIASL), and 363-383 (LGTLMGSIFAALIGYFWLSKV).

It belongs to the NhaA Na(+)/H(+) (TC 2.A.33) antiporter family.

Its subcellular location is the cell inner membrane. It carries out the reaction Na(+)(in) + 2 H(+)(out) = Na(+)(out) + 2 H(+)(in). In terms of biological role, na(+)/H(+) antiporter that extrudes sodium in exchange for external protons. This is Na(+)/H(+) antiporter NhaA from Shewanella oneidensis (strain ATCC 700550 / JCM 31522 / CIP 106686 / LMG 19005 / NCIMB 14063 / MR-1).